The chain runs to 287 residues: AA9 family lytic polysaccharide monooxygenase C (287 aa).

The N-terminal stretch at 1–16 is a signal peptide; that stretch reads MKSVLVALATATAVSA. Cu(2+) is bound at residue histidine 17. Residue asparagine 22 is glycosylated (N-linked (GlcNAc...) asparagine). 2 cysteine pairs are disulfide-bonded: cysteine 77–cysteine 230 and cysteine 200–cysteine 284. Residue histidine 114 participates in Cu(2+) binding. The O2 site is built by histidine 216 and glutamine 225. A Cu(2+)-binding site is contributed by tyrosine 227.

This sequence belongs to the polysaccharide monooxygenase AA9 family. Cu(2+) is required as a cofactor.

Its subcellular location is the secreted. It carries out the reaction [(1-&gt;4)-beta-D-glucosyl]n+m + reduced acceptor + O2 = 4-dehydro-beta-D-glucosyl-[(1-&gt;4)-beta-D-glucosyl]n-1 + [(1-&gt;4)-beta-D-glucosyl]m + acceptor + H2O.. Functionally, lytic polysaccharide monooxygenase (LPMO) that depolymerizes crystalline and amorphous polysaccharides via the oxidation of scissile alpha- or beta-(1-4)-glycosidic bonds, yielding C1 or C4 oxidation products. Catalysis by LPMOs requires the reduction of the active-site copper from Cu(II) to Cu(I) by a reducing agent and H(2)O(2) or O(2) as a cosubstrate. This Podospora anserina (strain S / ATCC MYA-4624 / DSM 980 / FGSC 10383) (Pleurage anserina) protein is AA9 family lytic polysaccharide monooxygenase C.